A 901-amino-acid chain; its full sequence is Protein translocase subunit SecA (901 aa).

Residues glutamine 87, glycine 105–threonine 109, and aspartate 512 each bind ATP. Cysteine 885, cysteine 887, cysteine 896, and histidine 897 together coordinate Zn(2+).

The protein belongs to the SecA family. In terms of assembly, monomer and homodimer. Part of the essential Sec protein translocation apparatus which comprises SecA, SecYEG and auxiliary proteins SecDF-YajC and YidC. Requires Zn(2+) as cofactor.

The protein localises to the cell inner membrane. The protein resides in the cytoplasm. The catalysed reaction is ATP + H2O + cellular proteinSide 1 = ADP + phosphate + cellular proteinSide 2.. Its function is as follows. Part of the Sec protein translocase complex. Interacts with the SecYEG preprotein conducting channel. Has a central role in coupling the hydrolysis of ATP to the transfer of proteins into and across the cell membrane, serving both as a receptor for the preprotein-SecB complex and as an ATP-driven molecular motor driving the stepwise translocation of polypeptide chains across the membrane. The protein is Protein translocase subunit SecA of Salmonella schwarzengrund (strain CVM19633).